The sequence spans 192 residues: Transcriptional activator GvpE (192 aa).

140-145 is a DNA binding site; sequence KRKVYR. Positions 150-181 are leucine-zipper; that stretch reads EATFDTVEPAVNRLVTFSLVLKALMIDCNARY.

As to quaternary structure, interacts with GvpD, also with c-GvpD from H.salinarum.

It localises to the cytoplasm. With respect to regulation, the amount of protein that accumulates is controlled by GvpD; GvpD causes a reduction in the amount of GvpE, preventing accumulation of excessive amounts of gas vesicles. Functionally, plays a regulatory role in gas vesicle synthesis, activates transcription of the gvpA operon, and probably of the gvpD operon. Gas vesicles are hollow, gas filled proteinaceous nanostructures found in some microorganisms. They allow positioning of halobacteria at the optimal depth for growth in the poorly aerated, shallow brine pools of their habitat. Its function is as follows. Expression of a 9.5 kb mc-vac DNA fragment containing 2 divergently transcribed regions (gvpD-gvpE-gvpF-gvpG-gvpH-gvpI-gvpJ-gvpK-gvpL-gvpM and gvpA-gvpC-gvpN-gvpO) allows H.volcanii to produce gas vesicles. This chain is Transcriptional activator GvpE, found in Haloferax mediterranei (strain ATCC 33500 / DSM 1411 / JCM 8866 / NBRC 14739 / NCIMB 2177 / R-4) (Halobacterium mediterranei).